The primary structure comprises 120 residues: Large ribosomal subunit protein uL18 (120 aa).

It belongs to the universal ribosomal protein uL18 family. As to quaternary structure, part of the 50S ribosomal subunit; part of the 5S rRNA/L5/L18/L25 subcomplex. Contacts the 5S and 23S rRNAs.

Its function is as follows. This is one of the proteins that bind and probably mediate the attachment of the 5S RNA into the large ribosomal subunit, where it forms part of the central protuberance. This is Large ribosomal subunit protein uL18 from Finegoldia magna (strain ATCC 29328 / DSM 20472 / WAL 2508) (Peptostreptococcus magnus).